A 92-amino-acid chain; its full sequence is DNA-binding protein HU (92 aa).

This sequence belongs to the bacterial histone-like protein family. In terms of assembly, homodimer.

Histone-like DNA-binding protein which is capable of wrapping DNA to stabilize it, and thus to prevent its denaturation under extreme environmental conditions. This is DNA-binding protein HU (hup) from Buchnera aphidicola subsp. Baizongia pistaciae (strain Bp).